Here is a 166-residue protein sequence, read N- to C-terminus: Co-chaperone protein HscB homolog (166 aa).

The region spanning 3–75 is the J domain; that stretch reads QYFTLFRIEP…IDRAAYLLKT (73 aa).

It belongs to the HscB family. Interacts with HscA and stimulates its ATPase activity.

Co-chaperone involved in the maturation of iron-sulfur cluster-containing proteins. Seems to help targeting proteins to be folded toward HscA. The sequence is that of Co-chaperone protein HscB homolog from Neisseria gonorrhoeae (strain NCCP11945).